We begin with the raw amino-acid sequence, 814 residues long: Kexin (814 aa).

Residues 1-19 (MKVRKYITLCFWWAFSTSA) form the signal peptide. A propeptide spanning residues 20–109 (LVSSQQIPLK…LFPRNDLFKR (90 aa)) is cleaved from the precursor. Asn-42 carries N-linked (GlcNAc...) asparagine glycosylation. A propeptide spans 110 to 113 (LPVP) (removed by dipeptidylpeptidase STE13). Residues 114–678 (APPMDSSLLP…KLSSPRQAMH (565 aa)) are Lumenal-facing. Asp-135 serves as a coordination point for Ca(2+). A Peptidase S8 domain is found at 141–453 (QWHLVNPSFP…FGKIDAHKLI (313 aa)). Asn-163 carries N-linked (GlcNAc...) asparagine glycosylation. Asp-175 (charge relay system) is an active-site residue. Residue Asp-184 coordinates Ca(2+). His-213 serves as the catalytic Charge relay system. Residues Asn-227, Asp-277, Asp-320, and Glu-350 each contribute to the Ca(2+) site. Disulfide bonds link Cys-230-Cys-377 and Cys-322-Cys-352. Residue Ser-385 is the Charge relay system of the active site. 2 N-linked (GlcNAc...) asparagine glycosylation sites follow: Asn-404 and Asn-480. In terms of domain architecture, P/Homo B spans 462 to 596 (VNAQTWFYLP…RLKLFGESID (135 aa)). The segment at 651–671 (PQTTTASTDPDSDPNTPKKLS) is disordered. Over residues 653 to 667 (TTTASTDPDSDPNTP) the composition is skewed to low complexity. Residues 679–699 (YFLTIFLIGATFLVLYFMFFM) form a helical membrane-spanning segment. Topologically, residues 700 to 814 (KSRRRIRRSR…PDVPPSSGRS (115 aa)) are cytoplasmic. The disordered stretch occupies residues 756 to 814 (SLSSSENGDAEHTIDSVLTNENPFSDPIKQKFPNDANAESASNKLQELQPDVPPSSGRS). A compositionally biased stretch (polar residues) spans 792–801 (NAESASNKLQ).

The protein belongs to the peptidase S8 family. Furin subfamily. Ca(2+) serves as cofactor. In terms of processing, O-glycosylated.

Its subcellular location is the golgi apparatus. It is found in the trans-Golgi network membrane. It catalyses the reaction Cleavage of -Lys-Arg-|-Xaa- and -Arg-Arg-|-Xaa- bonds to process yeast alpha-factor pheromone and killer toxin precursors.. Processing of precursors of alpha-factors and killer toxin. The protein is Kexin (KEX2) of Saccharomyces cerevisiae (strain ATCC 204508 / S288c) (Baker's yeast).